A 375-amino-acid polypeptide reads, in one-letter code: Actin-binding Rho-activating protein (375 aa).

Positions 37–101 (ANENSTRQAQ…ATEVSHIKRK (65 aa)) are disordered. A compositionally biased stretch (basic and acidic residues) spans 80–101 (PDGDREGRGSEEATEVSHIKRK). A phosphoserine mark is found at Ser150 and Ser182. The tract at residues 175–197 (EPKWKSDSIDTEDSGYGGDMEER) is disordered. Actin-binding regions lie at residues 193 to 293 (DMEE…AERA) and 294 to 375 (KRAE…TLLE). 2 interaction with actin regions span residues 234-279 (SQVD…GDEG) and 346-375 (MRAR…TLLE).

Binds F-actin and ABLIM1, ABLIM2 and ABLIM3. Interaction with ABLIM2 and ABLIM3 enhances activity. As to expression, predominantly expressed in heart and skeletal muscle, and expressed at lower levels in adrenal gland, brain, kidney, liver, and testis.

Its subcellular location is the cytoplasm. The protein resides in the myofibril. The protein localises to the sarcomere. It localises to the cytoskeleton. In terms of biological role, acts as an activator of serum response factor (SRF)-dependent transcription possibly by inducing nuclear translocation of MKL1 or MKL2 and through a mechanism requiring Rho-actin signaling. The sequence is that of Actin-binding Rho-activating protein from Rattus norvegicus (Rat).